The following is an 803-amino-acid chain: DNA polymerase 2 (803 aa).

It belongs to the DNA polymerase type-B family.

It carries out the reaction DNA(n) + a 2'-deoxyribonucleoside 5'-triphosphate = DNA(n+1) + diphosphate. The chain is DNA polymerase 2 (polB) from Aeropyrum pernix (strain ATCC 700893 / DSM 11879 / JCM 9820 / NBRC 100138 / K1).